The chain runs to 222 residues: Nucleoside triphosphate pyrophosphatase (222 aa).

Catalysis depends on D82, which acts as the Proton acceptor.

Belongs to the Maf family. The cofactor is a divalent metal cation.

Its subcellular location is the cytoplasm. The enzyme catalyses a ribonucleoside 5'-triphosphate + H2O = a ribonucleoside 5'-phosphate + diphosphate + H(+). It catalyses the reaction a 2'-deoxyribonucleoside 5'-triphosphate + H2O = a 2'-deoxyribonucleoside 5'-phosphate + diphosphate + H(+). In terms of biological role, nucleoside triphosphate pyrophosphatase. May have a dual role in cell division arrest and in preventing the incorporation of modified nucleotides into cellular nucleic acids. The sequence is that of Nucleoside triphosphate pyrophosphatase from Mycobacterium bovis (strain ATCC BAA-935 / AF2122/97).